Consider the following 168-residue polypeptide: Plastocyanin, chloroplastic (168 aa).

One can recognise a Plastocyanin-like domain in the interval 70 to 168; sequence VEVLLGGGDG…AGMVGKVTVN (99 aa). His-106, Cys-153, His-156, and Met-161 together coordinate Cu cation.

Belongs to the plastocyanin family. Requires Cu(2+) as cofactor.

It localises to the plastid. The protein localises to the chloroplast thylakoid membrane. Participates in electron transfer between P700 and the cytochrome b6-f complex in photosystem I. This Spinacia oleracea (Spinach) protein is Plastocyanin, chloroplastic (PETE).